A 391-amino-acid polypeptide reads, in one-letter code: Multidrug resistance protein MdtL (391 aa).

The Cytoplasmic segment spans residues 1–3; the sequence is MSR. A helical membrane pass occupies residues 4-24; that stretch reads FLICSFALVLLYPAGIDMYLV. The Periplasmic segment spans residues 25-41; that stretch reads GLPRIAADLNASEAQLH. The helical transmembrane segment at 42–62 threads the bilayer; it reads IAFSVYLAGMAAAMLFAGKVA. The Cytoplasmic portion of the chain corresponds to 63–68; sequence DRSGRK. The chain crosses the membrane as a helical span at residues 69–89; that stretch reads PVAIPGAALFIIASVFCSLAE. Residues 90 to 92 are Periplasmic-facing; sequence TSA. The helical transmembrane segment at 93–113 threads the bilayer; sequence LFLAGRFLQGLGAGCCYVVAF. Over 114–130 the chain is Cytoplasmic; sequence AILRDTLDDRRRAKVLS. Residues 131–151 traverse the membrane as a helical segment; the sequence is LLNGITCIIPVLAPVLGHLIM. Over 152–157 the chain is Periplasmic; sequence LKFPWQ. A helical membrane pass occupies residues 158-178; sequence SLFWTMATMGIAVLMLSLFIL. Topologically, residues 179 to 202 are cytoplasmic; sequence KETRPAAPAASDKPRENSESLLNR. Residues 203–222 form a helical membrane-spanning segment; the sequence is FFLSRVVITTLSVSVILTFV. The Periplasmic segment spans residues 223–244; the sequence is NTSPVLLMEIMGFERGEYATIM. A helical transmembrane segment spans residues 245 to 265; it reads ALTAGVSMTVSFSTPFALGIF. Topologically, residues 266–268 are cytoplasmic; it reads KPR. A helical membrane pass occupies residues 269 to 289; sequence TLMITSQVLFLAAGITLAVSP. The Periplasmic segment spans residues 290 to 292; the sequence is SHA. Residues 293-313 traverse the membrane as a helical segment; it reads VSLFGITLICAGFSVGFGVAM. The Cytoplasmic segment spans residues 314–330; it reads SQALGPFSLRAGVASST. Residues 331–351 form a helical membrane-spanning segment; sequence LGIAQVCGSSLWIWLAAVVGI. At 352 to 355 the chain is on the periplasmic side; that stretch reads GAWN. A helical transmembrane segment spans residues 356–376; that stretch reads MLIGILIACSIVSLLLIMFVA. The Cytoplasmic segment spans residues 377–391; that stretch reads PGRPVAAHEEIHHHA.

It belongs to the major facilitator superfamily. DHA1 family. MdtL (TC 2.A.1.2.22) subfamily.

It is found in the cell inner membrane. Confers resistance to chloramphenicol. The protein is Multidrug resistance protein MdtL of Escherichia coli O6:K15:H31 (strain 536 / UPEC).